The following is a 95-amino-acid chain: Co-chaperonin GroES (95 aa).

Belongs to the GroES chaperonin family. As to quaternary structure, heptamer of 7 subunits arranged in a ring. Interacts with the chaperonin GroEL.

The protein localises to the cytoplasm. Its function is as follows. Together with the chaperonin GroEL, plays an essential role in assisting protein folding. The GroEL-GroES system forms a nano-cage that allows encapsulation of the non-native substrate proteins and provides a physical environment optimized to promote and accelerate protein folding. GroES binds to the apical surface of the GroEL ring, thereby capping the opening of the GroEL channel. This Xylella fastidiosa (strain M12) protein is Co-chaperonin GroES.